The chain runs to 268 residues: MEVTSQSTLPPGFRFHPTDEELIVYYLRNQTMSKPCPVSIIPEVDIYKFDPWQLPEKTEFGENEWYFFSPRERKYPNGVRPNRAAVSGYWKATGTDKAIHSGSSNVGVKKALVFYKGRPPKGIKTDWIMHEYRLHDSRKASTKRNGSMRLDEWVLCRIYKKRGASKLLNEQEGFMDEVLMEDETKVVVNEAERRTEEEIMMMTSMKLPRTCSLAHLLEMDYMGPVSHIDNFSQFDHLHQPDSESSWFGDLQFNQDEILNHHRQAMFKF.

The NAC domain occupies 9-161 (LPPGFRFHPT…EWVLCRIYKK (153 aa)). A DNA-binding region spans residues 106–167 (VGVKKALVFY…IYKKRGASKL (62 aa)).

In terms of tissue distribution, expressed in senescing leaves, petals and sepals.

The protein localises to the nucleus. In terms of biological role, transcription activator that binds to, and transactivates the promoter of the abscisic aldehyde oxidase AAO3. Promotes chlorophyll degradation in leaves by enhancing transcription of AAO3, which leads to increased levels of the senescence-inducing hormone abscisic acid (ABA). Involved in the control of dehydration in senescing leaves. Binds to the DNA sequence 5'-CACGTAAGT-3' of SAG113 promoter. SAG113 acts as a negative regulator of ABA signaling for stomatal closure in leaves, and controls water loss during leaf senescence. Transcription factor of the NAC family involved in senescence. May function in the transition between active cell division and cell expansion. Required for normal seed development and morphology. The polypeptide is NAC transcription factor 29 (NAC029) (Arabidopsis thaliana (Mouse-ear cress)).